We begin with the raw amino-acid sequence, 128 residues long: Leucine-rich single-pass membrane protein 1 (128 aa).

At Ser24 the chain carries Phosphoserine. A helical membrane pass occupies residues 65 to 85 (VGLIIVLIISLALVSFVIFLI). Positions 87–111 (QTENKMEDVSRRLAAEGKDIDDLKK) form a coiled coil.

It localises to the membrane. This is Leucine-rich single-pass membrane protein 1 (LSMEM1) from Bos taurus (Bovine).